Here is a 338-residue protein sequence, read N- to C-terminus: Popeye domain-containing protein 1-A (338 aa).

Residues 1-40 (MTTESIFITTLPMDFNSQFDNITIGLNDNETLCENWREIH) are Extracellular-facing. N-linked (GlcNAc...) asparagine glycans are attached at residues Asn-21 and Asn-29. A helical transmembrane segment spans residues 41–61 (HLVFHLANTCFAAGLVIPSTL). The Cytoplasmic portion of the chain corresponds to 62–65 (NLHM). A helical transmembrane segment spans residues 66–86 (LFLRGMLCLGCTFFIIWAVLF). The Extracellular portion of the chain corresponds to 87–91 (RCALD). The chain crosses the membrane as a helical span at residues 92 to 112 (IMIWNATFLSINFMHFVYLVY). The Cytoplasmic segment spans residues 113 to 338 (KKRPIKIKKE…VGPLSHAVFC (226 aa)). Residues 296–317 (TNDNEDGLQNFLRGTSTTSSQR) form a disordered region. Residues 307 to 317 (LRGTSTTSSQR) are compositionally biased toward polar residues.

The protein belongs to the popeye family. In terms of tissue distribution, expressed in the heart.

Its subcellular location is the lateral cell membrane. It is found in the cell junction. It localises to the tight junction. The protein localises to the membrane. Functionally, cell adhesion molecule involved in the establishment and/or maintenance of cell integrity. Plays a role in vamp3-mediated vesicular transport and recycling of different receptor molecules. May be involved in the formation and regulation of the tight junction (TJ) paracellular permeability barrier in epithelial cells. May induce primordial adhesive contact and aggregation of epithelial cells in a Ca(2+)-independent manner. May be involved in epithelial movement during corneal sheet formation and regeneration. May play a role in the regulation of cell shape and movement by modulating the Rho-GTPase activity. May also be involved in striated muscle regeneration and in the regulation of cell spreading. In Xenopus laevis (African clawed frog), this protein is Popeye domain-containing protein 1-A (popdc1-a).